The primary structure comprises 75 residues: UPF0352 protein VP2129 (75 aa).

It belongs to the UPF0352 family.

This is UPF0352 protein VP2129 from Vibrio parahaemolyticus serotype O3:K6 (strain RIMD 2210633).